The sequence spans 275 residues: MTLQQEIIQALGAKPHINPEEEIRRSVDFLKAYLKTYPFLKSLVLGISGGQDSTLAGKLSQMAIAELREETGDNALQFIAVRLPYGVQADEQDCQDAIAFIQPDRVLTVNIKGAVLASEQALREAGIELSDFVRGNEKARERMKAQYSIAGMTHGVVVGTDHAAEAITGFFTKYGDGGTDINPLHRLNKRQGKQLLAALGCPEHLYKKVPTADLEDDRPSLPDEAALGVTYDNIDDYLEGKTLDSAIAKTIEGWYVKTEHKRRLPITVFDDFWKK.

46–53 (GISGGQDS) contacts ATP. Asp-52 is a binding site for Mg(2+). Arg-140 provides a ligand contact to deamido-NAD(+). Thr-160 provides a ligand contact to ATP. A Mg(2+)-binding site is contributed by Glu-165. The deamido-NAD(+) site is built by Lys-173 and Asp-180. 2 residues coordinate ATP: Lys-189 and Thr-211. 260 to 261 (HK) is a deamido-NAD(+) binding site.

Belongs to the NAD synthetase family. Homodimer.

The enzyme catalyses deamido-NAD(+) + NH4(+) + ATP = AMP + diphosphate + NAD(+) + H(+). Its pathway is cofactor biosynthesis; NAD(+) biosynthesis; NAD(+) from deamido-NAD(+) (ammonia route): step 1/1. Functionally, catalyzes the ATP-dependent amidation of deamido-NAD to form NAD. Uses ammonia as a nitrogen source. The sequence is that of NH(3)-dependent NAD(+) synthetase from Salmonella heidelberg (strain SL476).